The primary structure comprises 346 residues: Haptoglobin (346 aa).

The first 18 residues, 1–18 (MRALGAVVTLLLWGQLFA), serve as a signal peptide directing secretion. A Sushi domain is found at 31-87 (DSCPKPPEIENGYVEHLVRYRCQHYRLRTEGDGVYTLNSEKQWVNTAAGERLPECEA). 4 disulfides stabilise this stretch: C52–C85, C89–C206, C249–C280, and C291–C321. Residues 102–344 (IIGGSLDAKG…FLDWIQETMA (243 aa)) enclose the Peptidase S1 domain. N147 and N181 each carry an N-linked (GlcNAc...) asparagine glycan. The tract at residues 258–263 (VPEKEG) is interaction with CD163.

The protein belongs to the peptidase S1 family. As to quaternary structure, tetramer of two alpha and two beta chains; disulfide-linked. The hemoglobin/haptoglobin complex is composed of a haptoglobin dimer bound to two hemoglobin alpha-beta dimers. Interacts with CD163. Interacts with ERGIC3. In terms of tissue distribution, expressed by the liver and secreted in plasma.

The protein localises to the secreted. Its function is as follows. As a result of hemolysis, hemoglobin is found to accumulate in the kidney and is secreted in the urine. Haptoglobin captures, and combines with free plasma hemoglobin to allow hepatic recycling of heme iron and to prevent kidney damage. Haptoglobin also acts as an antioxidant, has antibacterial activity and plays a role in modulating many aspects of the acute phase response. Hemoglobin/haptoglobin complexes are rapidly cleared by the macrophage CD163 scavenger receptor expressed on the surface of liver Kupfer cells through an endocytic lysosomal degradation pathway. This is Haptoglobin (HP) from Mesocricetus auratus (Golden hamster).